A 195-amino-acid polypeptide reads, in one-letter code: Imidazoleglycerol-phosphate dehydratase (195 aa).

The protein belongs to the imidazoleglycerol-phosphate dehydratase family.

The protein resides in the cytoplasm. It carries out the reaction D-erythro-1-(imidazol-4-yl)glycerol 3-phosphate = 3-(imidazol-4-yl)-2-oxopropyl phosphate + H2O. It participates in amino-acid biosynthesis; L-histidine biosynthesis; L-histidine from 5-phospho-alpha-D-ribose 1-diphosphate: step 6/9. The chain is Imidazoleglycerol-phosphate dehydratase from Thermotoga neapolitana (strain ATCC 49049 / DSM 4359 / NBRC 107923 / NS-E).